Consider the following 214-residue polypeptide: Ribonuclease HII (214 aa).

The RNase H type-2 domain occupies 26–214; that stretch reads EIVCGVDEAG…PVRAALDLIR (189 aa). Asp32, Glu33, and Asp124 together coordinate a divalent metal cation.

It belongs to the RNase HII family. It depends on Mn(2+) as a cofactor. Mg(2+) is required as a cofactor.

The protein resides in the cytoplasm. It carries out the reaction Endonucleolytic cleavage to 5'-phosphomonoester.. Endonuclease that specifically degrades the RNA of RNA-DNA hybrids. This Burkholderia cenocepacia (strain HI2424) protein is Ribonuclease HII.